The sequence spans 169 residues: Lutropin/choriogonadotropin subunit beta (169 aa).

Positions 1–20 are cleaved as a signal peptide; the sequence is METLQGLLLWMLLSVGGVWA. 6 disulfide bridges follow: Cys-29–Cys-77, Cys-43–Cys-92, Cys-46–Cys-130, Cys-54–Cys-108, Cys-58–Cys-110, and Cys-113–Cys-120. N-linked (GlcNAc...) asparagine glycosylation is present at Asn-33. The tract at residues 131–169 is disordered; that stretch reads APQASSSSKDPPSQPLTSTSTPTPGASRRSSHPLPIKTS. O-linked (GalNAc...) serine glycosylation is found at Ser-138 and Ser-143. The span at 145–158 shows a compositional bias: low complexity; the sequence is PLTSTSTPTPGASR. O-linked (GalNAc...) threonine glycosylation is present at Thr-147. Ser-148 is a glycosylation site (O-linked (GalNAc...) serine). Thr-149 carries O-linked (GalNAc...) threonine glycosylation. Ser-150 carries an O-linked (GalNAc...) serine glycan. O-linked (GalNAc...) threonine glycosylation is found at Thr-151 and Thr-153. Ser-157, Ser-160, Ser-161, and Ser-169 each carry an O-linked (GalNAc...) serine glycan.

This sequence belongs to the glycoprotein hormones subunit beta family. As to quaternary structure, heterodimer of a common alpha chain and a unique beta chain which confers biological specificity to thyrotropin, lutropin, follitropin and gonadotropin. In terms of processing, microheterogeneity at Asn-33. O-glycosylation appears to be responsible for the beta subunit contribution to the difference in LH-receptor binding activity between LSH-B and CG-B.

It is found in the secreted. Promotes spermatogenesis and ovulation by stimulating the testes and ovaries to synthesize steroids. This Equus caballus (Horse) protein is Lutropin/choriogonadotropin subunit beta (LHB).